The chain runs to 151 residues: FAD synthase (151 aa).

ATP-binding positions include 9–10 (TF), 14–17 (HPGH), aspartate 96, and tyrosine 123.

Belongs to the archaeal FAD synthase family. In terms of assembly, homodimer. Requires a divalent metal cation as cofactor.

The enzyme catalyses FMN + ATP + H(+) = FAD + diphosphate. The protein operates within cofactor biosynthesis; FAD biosynthesis; FAD from FMN: step 1/1. Its function is as follows. Catalyzes the transfer of the AMP portion of ATP to flavin mononucleotide (FMN) to produce flavin adenine dinucleotide (FAD) coenzyme. The protein is FAD synthase of Methanothermobacter thermautotrophicus (strain ATCC 29096 / DSM 1053 / JCM 10044 / NBRC 100330 / Delta H) (Methanobacterium thermoautotrophicum).